The primary structure comprises 639 residues: Pheromone B alpha 1 receptor (639 aa).

7 helical membrane-spanning segments follow: residues 8-28 (LFPI…PWHL), 37-57 (FFMM…VAWA), 70-90 (ISIR…LCII), 113-133 (ILVD…LQYI), 163-183 (VWPV…LLQF), 209-229 (MALA…VIVL), and 272-292 (LTRW…GFAE). Disordered regions lie at residues 375–416 (PRPM…SSPI), 490–516 (TVPH…SSSA), 532–563 (SADV…RLPS), and 611–639 (TTAG…RASV). A compositionally biased stretch (low complexity) spans 383 to 398 (SSSGFSSSDSTRFGSS). Low complexity-rich tracts occupy residues 541-551 (GSSAGGVASTS) and 611-621 (TTAGAPATTTP).

This sequence belongs to the G-protein coupled receptor 4 family.

Its subcellular location is the membrane. Functionally, receptor for the BAP1 pheromone, a prenylated mating factor. Has a role in the initiation of B-regulated nuclear migration. This is Pheromone B alpha 1 receptor (BAR1) from Schizophyllum commune (Split gill fungus).